A 196-amino-acid polypeptide reads, in one-letter code: Large ribosomal subunit protein uL18 (196 aa).

It belongs to the universal ribosomal protein uL18 family. Part of the 50S ribosomal subunit. Contacts the 5S and 23S rRNAs.

Its function is as follows. This is one of the proteins that bind and probably mediate the attachment of the 5S RNA into the large ribosomal subunit, where it forms part of the central protuberance. This is Large ribosomal subunit protein uL18 from Saccharolobus islandicus (strain L.S.2.15 / Lassen #1) (Sulfolobus islandicus).